Reading from the N-terminus, the 344-residue chain is L-rhamnose-proton symporter (344 aa).

10 helical membrane passes run 4–24 (AITM…CFYA), 38–58 (WSVG…ALLL), 68–88 (FNLS…IGNI), 101–121 (MGIG…TPII), 137–157 (TLLG…AGQL), 175–195 (LLLA…MNAA), 214–234 (LPSY…FCFI), 259–279 (ILLS…YAWG), 290–310 (MSWM…GLVL), and 321–341 (VAVL…VGLG).

Belongs to the L-rhamnose transporter (TC 2.A.7.6) family.

It is found in the cell inner membrane. The enzyme catalyses L-rhamnopyranose(in) + H(+)(in) = L-rhamnopyranose(out) + H(+)(out). Its function is as follows. Uptake of L-rhamnose across the cytoplasmic membrane with the concomitant transport of protons into the cell (symport system). The polypeptide is L-rhamnose-proton symporter (Salmonella agona (strain SL483)).